We begin with the raw amino-acid sequence, 702 residues long: Polyribonucleotide nucleotidyltransferase (702 aa).

Positions 486 and 492 each coordinate Mg(2+). In terms of domain architecture, KH spans 553–612; that stretch reads PSMATIKIDPEKIRDVIGKGGATIRSITEQTGASIDLDDDGTVRIYAADKASSDAALLKI. The S1 motif domain occupies 622-690; that stretch reads DKLYKGKVVR…ARGRIKLSMK (69 aa).

It belongs to the polyribonucleotide nucleotidyltransferase family. As to quaternary structure, component of the RNA degradosome, which is a multiprotein complex involved in RNA processing and mRNA degradation. Mg(2+) is required as a cofactor.

It is found in the cytoplasm. The enzyme catalyses RNA(n+1) + phosphate = RNA(n) + a ribonucleoside 5'-diphosphate. Functionally, involved in mRNA degradation. Catalyzes the phosphorolysis of single-stranded polyribonucleotides processively in the 3'- to 5'-direction. The polypeptide is Polyribonucleotide nucleotidyltransferase (Marinomonas sp. (strain MWYL1)).